Consider the following 142-residue polypeptide: Large ribosomal subunit protein uL11 (142 aa).

It belongs to the universal ribosomal protein uL11 family. As to quaternary structure, part of the ribosomal stalk of the 50S ribosomal subunit. Interacts with L10 and the large rRNA to form the base of the stalk. L10 forms an elongated spine to which L12 dimers bind in a sequential fashion forming a multimeric L10(L12)X complex. Post-translationally, one or more lysine residues are methylated.

Functionally, forms part of the ribosomal stalk which helps the ribosome interact with GTP-bound translation factors. This is Large ribosomal subunit protein uL11 from Pectobacterium carotovorum subsp. carotovorum (strain PC1).